The primary structure comprises 273 residues: Orotidine 5'-phosphate decarboxylase (273 aa).

Lys95 (proton donor) is an active-site residue.

Belongs to the OMP decarboxylase family. Type 2 subfamily.

It catalyses the reaction orotidine 5'-phosphate + H(+) = UMP + CO2. The protein operates within pyrimidine metabolism; UMP biosynthesis via de novo pathway; UMP from orotate: step 2/2. The chain is Orotidine 5'-phosphate decarboxylase from Bordetella bronchiseptica (strain ATCC BAA-588 / NCTC 13252 / RB50) (Alcaligenes bronchisepticus).